Reading from the N-terminus, the 388-residue chain is NADPH-dependent butanol dehydrogenase (388 aa).

This sequence belongs to the iron-containing alcohol dehydrogenase family.

In terms of biological role, this enzyme has activity using butanol and ethanol as substrates. This is NADPH-dependent butanol dehydrogenase (adh1) from Clostridium saccharobutylicum.